The following is a 1013-amino-acid chain: Probable outer membrane protein PmpG (1013 aa).

An N-terminal signal peptide occupies residues 1-27 (MQTSFHKFFLSMILAYSCCSLSGGGYA). Positions 733 to 1013 (GRSYCRGLWV…GLSAGSKVRF (281 aa)) constitute an Autotransporter domain.

This sequence belongs to the PMP outer membrane protein family.

It localises to the secreted. Its subcellular location is the cell wall. The protein localises to the cell outer membrane. This Chlamydia trachomatis serovar D (strain ATCC VR-885 / DSM 19411 / UW-3/Cx) protein is Probable outer membrane protein PmpG (pmpG).